The primary structure comprises 451 residues: 3-carboxy-cis,cis-muconate cycloisomerase (451 aa).

The protein belongs to the class-II fumarase/aspartase family.

The enzyme catalyses 2-(carboxymethyl)-5-oxo-2,5-dihydro-2-furoate = 3-carboxy-cis,cis-muconate + H(+). Its function is as follows. Catalyzes an anti cycloisomerization. The polypeptide is 3-carboxy-cis,cis-muconate cycloisomerase (pcaB) (Bradyrhizobium diazoefficiens (strain JCM 10833 / BCRC 13528 / IAM 13628 / NBRC 14792 / USDA 110)).